Reading from the N-terminus, the 129-residue chain is Small ribosomal subunit protein uS9 (129 aa).

The interval 108 to 129 is disordered; that stretch reads RMVERKKYGKKKARKSFQFSKR. Residues 114–129 are compositionally biased toward basic residues; sequence KYGKKKARKSFQFSKR.

The protein belongs to the universal ribosomal protein uS9 family.

This chain is Small ribosomal subunit protein uS9, found in Chlorobaculum tepidum (strain ATCC 49652 / DSM 12025 / NBRC 103806 / TLS) (Chlorobium tepidum).